Here is a 307-residue protein sequence, read N- to C-terminus: GTPase Era (307 aa).

Positions histidine 14 to glutamate 184 constitute an Era-type G domain. The G1 stretch occupies residues glycine 22–serine 29. GTP is bound at residue glycine 22–serine 29. Residues glutamine 48–arginine 52 form a G2 region. The tract at residues aspartate 69–glycine 72 is G3. GTP contacts are provided by residues aspartate 69 to leucine 73 and asparagine 131 to aspartate 134. Positions asparagine 131 to aspartate 134 are G4. The G5 stretch occupies residues leucine 162–alanine 164. One can recognise a KH type-2 domain in the interval leucine 215 to proline 292.

The protein belongs to the TRAFAC class TrmE-Era-EngA-EngB-Septin-like GTPase superfamily. Era GTPase family. Monomer.

It is found in the cytoplasm. The protein localises to the cell membrane. In terms of biological role, an essential GTPase that binds both GDP and GTP, with rapid nucleotide exchange. Plays a role in 16S rRNA processing and 30S ribosomal subunit biogenesis and possibly also in cell cycle regulation and energy metabolism. The sequence is that of GTPase Era from Deinococcus deserti (strain DSM 17065 / CIP 109153 / LMG 22923 / VCD115).